A 291-amino-acid chain; its full sequence is Glycine--tRNA ligase alpha subunit (291 aa).

This sequence belongs to the class-II aminoacyl-tRNA synthetase family. As to quaternary structure, tetramer of two alpha and two beta subunits.

The protein resides in the cytoplasm. It catalyses the reaction tRNA(Gly) + glycine + ATP = glycyl-tRNA(Gly) + AMP + diphosphate. The sequence is that of Glycine--tRNA ligase alpha subunit from Rhizorhabdus wittichii (strain DSM 6014 / CCUG 31198 / JCM 15750 / NBRC 105917 / EY 4224 / RW1) (Sphingomonas wittichii).